The primary structure comprises 419 residues: UDP-N-acetylglucosamine 1-carboxyvinyltransferase (419 aa).

Residue 22–23 coordinates phosphoenolpyruvate; it reads KN. UDP-N-acetyl-alpha-D-glucosamine is bound at residue R91. Residue C115 is the Proton donor of the active site. 2-(S-cysteinyl)pyruvic acid O-phosphothioketal is present on C115. UDP-N-acetyl-alpha-D-glucosamine-binding positions include 120–124, 160–163, D305, and V327; these read RPVDL and KVSV.

This sequence belongs to the EPSP synthase family. MurA subfamily.

The protein resides in the cytoplasm. The enzyme catalyses phosphoenolpyruvate + UDP-N-acetyl-alpha-D-glucosamine = UDP-N-acetyl-3-O-(1-carboxyvinyl)-alpha-D-glucosamine + phosphate. It functions in the pathway cell wall biogenesis; peptidoglycan biosynthesis. Functionally, cell wall formation. Adds enolpyruvyl to UDP-N-acetylglucosamine. The chain is UDP-N-acetylglucosamine 1-carboxyvinyltransferase from Salmonella arizonae (strain ATCC BAA-731 / CDC346-86 / RSK2980).